The sequence spans 550 residues: Probable acyl-activating enzyme 6 (550 aa).

The protein belongs to the ATP-dependent AMP-binding enzyme family. In terms of tissue distribution, expressed at low levels in roots, leaves, stems and developing seeds.

Its function is as follows. May act as an acid--thiol ligase that activates carboxylic acids by forming acyl-CoAs. In Arabidopsis thaliana (Mouse-ear cress), this protein is Probable acyl-activating enzyme 6 (AAE6).